Here is an 89-residue protein sequence, read N- to C-terminus: Putative regulatory protein PCC8801_0196 (89 aa).

The protein belongs to the RemA family.

The chain is Putative regulatory protein PCC8801_0196 from Rippkaea orientalis (strain PCC 8801 / RF-1) (Cyanothece sp. (strain PCC 8801)).